The primary structure comprises 660 residues: Methionine--tRNA ligase 1 (660 aa).

The short motif at 15-25 (YYPSGKLHIGH) is the 'HIGH' region element. A 'KMSKS' region motif is present at residues 310–314 (KMSKS). ATP is bound at residue Lys-313. The tRNA-binding domain occupies 560-660 (DFFKVELRVA…QNLPNGTKIK (101 aa)).

The protein belongs to the class-I aminoacyl-tRNA synthetase family. MetG type 2B subfamily. As to quaternary structure, homodimer.

It localises to the cytoplasm. The catalysed reaction is tRNA(Met) + L-methionine + ATP = L-methionyl-tRNA(Met) + AMP + diphosphate. In terms of biological role, is required not only for elongation of protein synthesis but also for the initiation of all mRNA translation through initiator tRNA(fMet) aminoacylation. The chain is Methionine--tRNA ligase 1 from Bacillus cereus (strain ATCC 14579 / DSM 31 / CCUG 7414 / JCM 2152 / NBRC 15305 / NCIMB 9373 / NCTC 2599 / NRRL B-3711).